A 522-amino-acid polypeptide reads, in one-letter code: Polyprenol-phosphate-mannose--protein mannosyltransferase (522 aa).

Over Met1–Arg42 the chain is Cytoplasmic. A helical membrane pass occupies residues Gly43–Gly63. Over Ser64–Tyr119 the chain is Extracellular. Residues Asn120 to Val140 traverse the membrane as a helical segment. The Cytoplasmic portion of the chain corresponds to Arg141 to Ser149. A helical transmembrane segment spans residues Thr150 to Ala170. Position 171 (Arg171) is a topological domain, extracellular. A helical membrane pass occupies residues Thr172–Val192. Topologically, residues Asp193–Lys239 are cytoplasmic. A helical transmembrane segment spans residues Trp240–Ala260. The Extracellular segment spans residues Arg261–Ser281. The helical transmembrane segment at Gly282–Ala302 threads the bilayer. Residues Ser303–Glu390 lie on the Cytoplasmic side of the membrane. Residues Met391–Trp411 traverse the membrane as a helical segment. Over Arg412–Asp418 the chain is Extracellular. The helical transmembrane segment at Trp419–Ile439 threads the bilayer. Over Asp440 to Gln442 the chain is Cytoplasmic. Residues Met443–Leu463 form a helical membrane-spanning segment. Residues Gly464–Thr478 are Extracellular-facing. A helical membrane pass occupies residues Leu479–Tyr499. The Cytoplasmic segment spans residues Pro500 to Arg522.

It belongs to the glycosyltransferase 39 family.

Its subcellular location is the cell membrane. The protein operates within protein modification; protein glycosylation. Its function is as follows. Protein O-mannosyltransferase that catalyzes the transfer of a single mannose residue from a polyprenol phospho-mannosyl lipidic donor to the hydroxyl group of selected serine and threonine residues in acceptor proteins. The protein is Polyprenol-phosphate-mannose--protein mannosyltransferase (pmt) of Mycobacterium tuberculosis (strain CDC 1551 / Oshkosh).